The sequence spans 584 residues: Tricyclene synthase 1e20, chloroplastic (584 aa).

Residues 1–45 (MIYIWICFYLQTTLLPCSLSTRTKFAICHNTSKLHRAAYKTSRWN) constitute a chloroplast transit peptide. Residues Asn30, Asn209, and Asn322 are each glycosylated (N-linked (GlcNAc...) asparagine). Asp341 and Asp345 together coordinate Mg(2+). The DDXXD motif motif lies at 341–345 (DDIFD). N-linked (GlcNAc...) asparagine glycans are attached at residues Asn387 and Asn468. Asn485, Ser489, and Glu493 together coordinate Mg(2+). N-linked (GlcNAc...) asparagine glycosylation is present at Asn512.

The protein belongs to the terpene synthase family. Tpsg subfamily. Mg(2+) is required as a cofactor. Mn(2+) serves as cofactor. Accumulates at low levels in flowers; mostly expressed in both upper and lower petal lobes, and, to a lower extent, in tube and stamens.

The protein resides in the plastid. It localises to the chloroplast stroma. The catalysed reaction is (2E)-geranyl diphosphate = tricyclene + diphosphate. The enzyme catalyses (2E)-geranyl diphosphate = beta-myrcene + diphosphate. It functions in the pathway secondary metabolite biosynthesis; terpenoid biosynthesis. Functionally, may contribute to floral scent emission. In Antirrhinum majus (Garden snapdragon), this protein is Tricyclene synthase 1e20, chloroplastic (1e20).